A 127-amino-acid chain; its full sequence is Large ribosomal subunit protein eL18 (127 aa).

It belongs to the eukaryotic ribosomal protein eL18 family.

The chain is Large ribosomal subunit protein eL18 from Methanopyrus kandleri (strain AV19 / DSM 6324 / JCM 9639 / NBRC 100938).